The primary structure comprises 466 residues: Asparagine--tRNA ligase (466 aa).

It belongs to the class-II aminoacyl-tRNA synthetase family. Homodimer.

It localises to the cytoplasm. The enzyme catalyses tRNA(Asn) + L-asparagine + ATP = L-asparaginyl-tRNA(Asn) + AMP + diphosphate + H(+). The polypeptide is Asparagine--tRNA ligase (Enterobacter sp. (strain 638)).